Here is a 132-residue protein sequence, read N- to C-terminus: RING-H2 finger protein ATL39 (132 aa).

Residues Thr10–Ile30 form a helical membrane-spanning segment. Residues Cys85–Arg127 form an RING-type; atypical zinc finger.

This sequence belongs to the RING-type zinc finger family. ATL subfamily.

The protein resides in the membrane. The catalysed reaction is S-ubiquitinyl-[E2 ubiquitin-conjugating enzyme]-L-cysteine + [acceptor protein]-L-lysine = [E2 ubiquitin-conjugating enzyme]-L-cysteine + N(6)-ubiquitinyl-[acceptor protein]-L-lysine.. The protein operates within protein modification; protein ubiquitination. In Arabidopsis thaliana (Mouse-ear cress), this protein is RING-H2 finger protein ATL39 (ATL39).